The sequence spans 379 residues: Cytochrome b (379 aa).

4 helical membrane-spanning segments follow: residues 32 to 52 (YGSL…VLAT), 76 to 98 (WLLR…LHIG), 111 to 131 (VWNI…LGYV), and 177 to 197 (FFAL…LHIF). Heme b-binding residues include histidine 82 and histidine 96. Positions 181 and 195 each coordinate heme b. A ubiquinone is bound at residue histidine 200. 4 helical membrane passes run 223 to 243 (YSVK…VFTL), 287 to 304 (LGGV…FLFS), 320 to 340 (LARL…WLGS), and 348 to 367 (NEVA…TMCA).

Belongs to the cytochrome b family. In terms of assembly, the main subunits of complex b-c1 are: cytochrome b, cytochrome c1 and the Rieske protein. The cofactor is heme b.

It localises to the mitochondrion inner membrane. Its function is as follows. Component of the ubiquinol-cytochrome c reductase complex (complex III or cytochrome b-c1 complex) that is part of the mitochondrial respiratory chain. The b-c1 complex mediates electron transfer from ubiquinol to cytochrome c. Contributes to the generation of a proton gradient across the mitochondrial membrane that is then used for ATP synthesis. The polypeptide is Cytochrome b (mt:Cyt-b) (Brachionus plicatilis (Marine rotifer)).